We begin with the raw amino-acid sequence, 223 residues long: NLP effector protein 2 (223 aa).

A Conserved undecapeptide motif motif is present at residues 90-100 (AIMYSWYFPKD). Positions 107–113 (GHRHDWE) match the Conserved p motif motif.

This sequence belongs to the Necrosis inducing protein (NPP1) family.

It localises to the secreted. The protein localises to the host cytoplasm. Functionally, probable secreted effector that may act as a pathogen-associated molecular pattern (PAMP) recognized by the plant immune system. Seems not to induce necrosis, neither in several susceptible or resistant Vitis species nor in the dicot model plant Nicotiana benthamiana. The polypeptide is NLP effector protein 2 (Plasmopara viticola (Downy mildew of grapevine)).